The chain runs to 202 residues: UPF0056 membrane protein PH0214 (202 aa).

Transmembrane regions (helical) follow at residues 5–25 (ILSS…ILLV), 47–67 (IGFI…QDIF), 76–96 (VAGG…GGMV), 104–124 (ILAL…AAIT), 135–155 (IIVS…LMMI), and 174–194 (IIGL…AGGI).

Belongs to the UPF0056 (MarC) family.

Its subcellular location is the cell membrane. In Pyrococcus horikoshii (strain ATCC 700860 / DSM 12428 / JCM 9974 / NBRC 100139 / OT-3), this protein is UPF0056 membrane protein PH0214.